The following is a 768-amino-acid chain: DNA replication licensing factor MCM3 homolog 2 (768 aa).

The MCM domain occupies 290-497 (TFDLLGNSLA…IDRQISEHVA (208 aa)). 340-347 (GDPSVAKS) is an ATP binding site. The short motif at 472-475 (SRFD) is the Arginine finger element. Positions 661–670 (EMKQQADHDA) are enriched in basic and acidic residues. Residues 661–689 (EMKQQADHDAGATGGTVDGHGSSGNDPMD) form a disordered region. A compositionally biased stretch (gly residues) spans 672–682 (ATGGTVDGHGS).

The protein belongs to the MCM family.

The protein localises to the nucleus. The enzyme catalyses ATP + H2O = ADP + phosphate + H(+). Its function is as follows. Acts as a factor that allows the DNA to undergo a single round of replication per cell cycle. Required for DNA replication and cell proliferation. May act as a component of the MCM complex which is the putative replicative helicase of the replication licensing system in eukaryotic cells. This Zea mays (Maize) protein is DNA replication licensing factor MCM3 homolog 2 (ROA2).